The primary structure comprises 275 residues: Formamidopyrimidine-DNA glycosylase (275 aa).

The Schiff-base intermediate with DNA role is filled by Pro-2. Glu-3 (proton donor) is an active-site residue. Catalysis depends on Lys-59, which acts as the Proton donor; for beta-elimination activity. The DNA site is built by His-93, Arg-112, and Arg-153. The FPG-type zinc finger occupies 238–272 (NVYDRVGKPCPRCQTAIERIVVAQRSTFFCPLCQV). Arg-262 serves as the catalytic Proton donor; for delta-elimination activity.

It belongs to the FPG family. Monomer. Requires Zn(2+) as cofactor.

The enzyme catalyses Hydrolysis of DNA containing ring-opened 7-methylguanine residues, releasing 2,6-diamino-4-hydroxy-5-(N-methyl)formamidopyrimidine.. It catalyses the reaction 2'-deoxyribonucleotide-(2'-deoxyribose 5'-phosphate)-2'-deoxyribonucleotide-DNA = a 3'-end 2'-deoxyribonucleotide-(2,3-dehydro-2,3-deoxyribose 5'-phosphate)-DNA + a 5'-end 5'-phospho-2'-deoxyribonucleoside-DNA + H(+). In terms of biological role, involved in base excision repair of DNA damaged by oxidation or by mutagenic agents. Acts as a DNA glycosylase that recognizes and removes damaged bases. Has a preference for oxidized purines, such as 7,8-dihydro-8-oxoguanine (8-oxoG). Has AP (apurinic/apyrimidinic) lyase activity and introduces nicks in the DNA strand. Cleaves the DNA backbone by beta-delta elimination to generate a single-strand break at the site of the removed base with both 3'- and 5'-phosphates. The polypeptide is Formamidopyrimidine-DNA glycosylase (Chloroflexus aggregans (strain MD-66 / DSM 9485)).